The primary structure comprises 365 residues: UDP-N-acetylglucosamine--N-acetylmuramyl-(pentapeptide) pyrophosphoryl-undecaprenol N-acetylglucosamine transferase (365 aa).

UDP-N-acetyl-alpha-D-glucosamine is bound by residues Thr19–Gly21, Asn131, Arg170, Ser201, Ile255, Ala274–Glu279, and Gln300.

Belongs to the glycosyltransferase 28 family. MurG subfamily.

Its subcellular location is the cell inner membrane. It carries out the reaction di-trans,octa-cis-undecaprenyl diphospho-N-acetyl-alpha-D-muramoyl-L-alanyl-D-glutamyl-meso-2,6-diaminopimeloyl-D-alanyl-D-alanine + UDP-N-acetyl-alpha-D-glucosamine = di-trans,octa-cis-undecaprenyl diphospho-[N-acetyl-alpha-D-glucosaminyl-(1-&gt;4)]-N-acetyl-alpha-D-muramoyl-L-alanyl-D-glutamyl-meso-2,6-diaminopimeloyl-D-alanyl-D-alanine + UDP + H(+). The protein operates within cell wall biogenesis; peptidoglycan biosynthesis. In terms of biological role, cell wall formation. Catalyzes the transfer of a GlcNAc subunit on undecaprenyl-pyrophosphoryl-MurNAc-pentapeptide (lipid intermediate I) to form undecaprenyl-pyrophosphoryl-MurNAc-(pentapeptide)GlcNAc (lipid intermediate II). The sequence is that of UDP-N-acetylglucosamine--N-acetylmuramyl-(pentapeptide) pyrophosphoryl-undecaprenol N-acetylglucosamine transferase from Acinetobacter baumannii (strain ATCC 17978 / DSM 105126 / CIP 53.77 / LMG 1025 / NCDC KC755 / 5377).